A 711-amino-acid chain; its full sequence is Ribosomal RNA large subunit methyltransferase K/L (711 aa).

The THUMP domain maps to 42–153; that stretch reads DAQRAVLWSR…KGRATISVDL (112 aa).

It belongs to the methyltransferase superfamily. RlmKL family.

It is found in the cytoplasm. The catalysed reaction is guanosine(2445) in 23S rRNA + S-adenosyl-L-methionine = N(2)-methylguanosine(2445) in 23S rRNA + S-adenosyl-L-homocysteine + H(+). It carries out the reaction guanosine(2069) in 23S rRNA + S-adenosyl-L-methionine = N(2)-methylguanosine(2069) in 23S rRNA + S-adenosyl-L-homocysteine + H(+). Functionally, specifically methylates the guanine in position 2445 (m2G2445) and the guanine in position 2069 (m7G2069) of 23S rRNA. This Xanthomonas campestris pv. campestris (strain B100) protein is Ribosomal RNA large subunit methyltransferase K/L.